The chain runs to 89 residues: Small ribosomal subunit protein bS20 (89 aa).

It belongs to the bacterial ribosomal protein bS20 family.

Functionally, binds directly to 16S ribosomal RNA. This Wolbachia sp. subsp. Brugia malayi (strain TRS) protein is Small ribosomal subunit protein bS20.